The following is a 340-amino-acid chain: GTPase Obg (340 aa).

Residues 1-159 (MGFIDEVKLC…KHVLLKLKVL (159 aa)) form the Obg domain. One can recognise an OBG-type G domain in the interval 160-329 (SDVGIIGMPN…LSEKLKKSNS (170 aa)). Residues 166–173 (GMPNAGKS), 191–195 (FTTVR), 212–215 (DIPG), 279–282 (NKCD), and 310–312 (NGD) contribute to the GTP site. Residues Ser173 and Thr193 each contribute to the Mg(2+) site.

This sequence belongs to the TRAFAC class OBG-HflX-like GTPase superfamily. OBG GTPase family. Monomer. The cofactor is Mg(2+).

Its subcellular location is the cytoplasm. Functionally, an essential GTPase which binds GTP, GDP and possibly (p)ppGpp with moderate affinity, with high nucleotide exchange rates and a fairly low GTP hydrolysis rate. Plays a role in control of the cell cycle, stress response, ribosome biogenesis and in those bacteria that undergo differentiation, in morphogenesis control. This is GTPase Obg from Wolbachia pipientis wMel.